A 153-amino-acid chain; its full sequence is Cofilin (153 aa).

Positions 15-147 (GVAVNDSALQ…AYESVLERVS (133 aa)) constitute an ADF-H domain.

Belongs to the actin-binding proteins ADF family.

It is found in the cytoplasm. The protein resides in the cytoskeleton. Its subcellular location is the nucleus matrix. Its function is as follows. Controls reversibly actin polymerization and depolymerization in a pH-sensitive manner. It has the ability to bind G- and F-actin in a 1:1 ratio of cofilin to actin. Binding to F-actin is regulated by tropomyosin. It is the major component of intranuclear and cytoplasmic actin rods. Required for accumulation of actin at the cell division site via depolymerizing actin at the cell ends. In association with myosin II has a role in the assembly of the contractile ring via severing actin filaments. Involved in the maintenance of the contractile ring once formed. In association with profilin and capping protein, has a role in the mitotic reorganization of the actin cytoskeleton. The chain is Cofilin (COF1) from Yarrowia lipolytica (strain CLIB 122 / E 150) (Yeast).